The following is a 185-amino-acid chain: ATP synthase subunit b 2 (185 aa).

The tract at residues 1–23 (MAEGHGDAKGATAHTAADGGHKA) is disordered. The span at 9 to 18 (KGATAHTAAD) shows a compositional bias: low complexity. A helical transmembrane segment spans residues 37–57 (LVSLTIAFVALYLIVSKIILP).

The protein belongs to the ATPase B chain family. F-type ATPases have 2 components, F(1) - the catalytic core - and F(0) - the membrane proton channel. F(1) has five subunits: alpha(3), beta(3), gamma(1), delta(1), epsilon(1). F(0) has three main subunits: a(1), b(2) and c(10-14). The alpha and beta chains form an alternating ring which encloses part of the gamma chain. F(1) is attached to F(0) by a central stalk formed by the gamma and epsilon chains, while a peripheral stalk is formed by the delta and b chains.

The protein localises to the cell inner membrane. Functionally, f(1)F(0) ATP synthase produces ATP from ADP in the presence of a proton or sodium gradient. F-type ATPases consist of two structural domains, F(1) containing the extramembraneous catalytic core and F(0) containing the membrane proton channel, linked together by a central stalk and a peripheral stalk. During catalysis, ATP synthesis in the catalytic domain of F(1) is coupled via a rotary mechanism of the central stalk subunits to proton translocation. In terms of biological role, component of the F(0) channel, it forms part of the peripheral stalk, linking F(1) to F(0). The b'-subunit is a diverged and duplicated form of b found in plants and photosynthetic bacteria. This Rhodopseudomonas palustris (strain BisB5) protein is ATP synthase subunit b 2 (atpF2).